The sequence spans 160 residues: Cytochrome b6-f complex subunit 4 (160 aa).

A run of 3 helical transmembrane segments spans residues 36-56 (LLYIFPVVILGTIACNVGLAV), 95-115 (LLGVLLMVSVPTGLLTVPFLE), and 131-151 (TVFLIGTVVALWLGIGATLPI).

The protein belongs to the cytochrome b family. PetD subfamily. In terms of assembly, the 4 large subunits of the cytochrome b6-f complex are cytochrome b6, subunit IV (17 kDa polypeptide, petD), cytochrome f and the Rieske protein, while the 4 small subunits are petG, petL, petM and petN. The complex functions as a dimer.

The protein resides in the plastid. Its subcellular location is the chloroplast thylakoid membrane. In terms of biological role, component of the cytochrome b6-f complex, which mediates electron transfer between photosystem II (PSII) and photosystem I (PSI), cyclic electron flow around PSI, and state transitions. This chain is Cytochrome b6-f complex subunit 4, found in Sorghum bicolor (Sorghum).